Consider the following 298-residue polypeptide: Aspartate carbamoyltransferase catalytic subunit (298 aa).

Carbamoyl phosphate contacts are provided by Arg50 and Thr51. Lys79 serves as a coordination point for L-aspartate. Carbamoyl phosphate-binding residues include Arg100, His128, and Gln131. 2 residues coordinate L-aspartate: Arg160 and Arg221. Carbamoyl phosphate contacts are provided by Leu260 and Pro261.

It belongs to the aspartate/ornithine carbamoyltransferase superfamily. ATCase family. In terms of assembly, heterooligomer of catalytic and regulatory chains.

It catalyses the reaction carbamoyl phosphate + L-aspartate = N-carbamoyl-L-aspartate + phosphate + H(+). It participates in pyrimidine metabolism; UMP biosynthesis via de novo pathway; (S)-dihydroorotate from bicarbonate: step 2/3. Its function is as follows. Catalyzes the condensation of carbamoyl phosphate and aspartate to form carbamoyl aspartate and inorganic phosphate, the committed step in the de novo pyrimidine nucleotide biosynthesis pathway. This Methanoculleus marisnigri (strain ATCC 35101 / DSM 1498 / JR1) protein is Aspartate carbamoyltransferase catalytic subunit.